The sequence spans 382 residues: Protein delta homolog 2 (382 aa).

The signal sequence occupies residues 1–26 (MPSGCRCLNLVCLLCILGATSQPARA). EGF-like domains lie at 27–58 (DDCS…LHCE), 62–89 (RMPG…KFCD), 91–129 (DEHI…RGCE), and 131–172 (KAGP…AHCE). Residues 27 to 305 (DDCSSHCDLA…RQESGLGESS (279 aa)) lie on the Extracellular side of the membrane. 17 disulfides stabilise this stretch: Cys-29–Cys-40, Cys-33–Cys-46, Cys-48–Cys-57, Cys-66–Cys-71, Cys-79–Cys-88, Cys-95–Cys-107, Cys-101–Cys-117, Cys-119–Cys-128, Cys-135–Cys-148, Cys-142–Cys-160, Cys-162–Cys-171, Cys-178–Cys-189, Cys-183–Cys-198, Cys-200–Cys-209, Cys-216–Cys-227, Cys-221–Cys-236, and Cys-238–Cys-247. N-linked (GlcNAc...) asparagine glycosylation occurs at Asn-157. In terms of domain architecture, EGF-like 5; calcium-binding spans 174–210 (NVDDCLMRPCANGATCIDGINRFSCLCPEGFAGRFCT). The region spanning 212–248 (NLDDCASRPCQRGARCRDRVHDFDCLCPSGYGGKTCE) is the EGF-like 6; calcium-binding domain. The helical transmembrane segment at 306–326 (LVALVVFGSLTAALVLATVLL) threads the bilayer. At 327–382 (TLRAWRRGICPTGPCCYPAPHYAPARQDQECQVSMLPAGFPLSPDLPPEPGKTTAL) the chain is on the cytoplasmic side.

As to expression, detected in a number of tissues including lung, brain, adrenal gland, testis, adult liver, placenta, ovary and thymus. Not detected in fetal liver or in adult spleen, muscle and heart.

The protein localises to the membrane. Regulates adipogenesis. The polypeptide is Protein delta homolog 2 (Dlk2) (Mus musculus (Mouse)).